The chain runs to 462 residues: Mitochondrial-processing peptidase subunit beta (462 aa).

The transit peptide at 1–20 directs the protein to the mitochondrion; sequence MFSRTASKFRNTRRLLSTIS. H70 lines the Zn(2+) pocket. E73 (proton acceptor) is an active-site residue. Residues H74 and E150 each contribute to the Zn(2+) site. Phosphoserine is present on S243.

This sequence belongs to the peptidase M16 family. In terms of assembly, heterodimer of MAS2 (alpha) and MAS1 (beta) subunits, forming the mitochondrial processing protease (MPP) in which MAS2 is involved in substrate recognition and binding and MAS1 is the catalytic subunit. Zn(2+) serves as cofactor.

Its subcellular location is the mitochondrion matrix. The catalysed reaction is Release of N-terminal transit peptides from precursor proteins imported into the mitochondrion, typically with Arg in position P2.. With respect to regulation, binding to MAS2 is required for catalytic activity. Inhibited by high levels (&gt; 1uM) of zinc. Inhibited by metal chelators ethylenediaminetetraacetic acid (EDTA) and O-phenanthroline. In terms of biological role, catalytic subunit of the essential mitochondrial processing protease (MPP), which cleaves the mitochondrial sequence off newly imported precursors proteins. Preferentially, cleaves after an arginine at position P2. The polypeptide is Mitochondrial-processing peptidase subunit beta (Saccharomyces cerevisiae (strain ATCC 204508 / S288c) (Baker's yeast)).